We begin with the raw amino-acid sequence, 104 residues long: Large ribosomal subunit protein uL24 (104 aa).

It belongs to the universal ribosomal protein uL24 family. In terms of assembly, part of the 50S ribosomal subunit.

Its function is as follows. One of two assembly initiator proteins, it binds directly to the 5'-end of the 23S rRNA, where it nucleates assembly of the 50S subunit. One of the proteins that surrounds the polypeptide exit tunnel on the outside of the subunit. This Pseudomonas syringae pv. syringae (strain B728a) protein is Large ribosomal subunit protein uL24.